The sequence spans 764 residues: 5-methyltetrahydropteroyltriglutamate--homocysteine methyltransferase (764 aa).

Residues 16-19 (RELK) and Lys117 each bind 5-methyltetrahydropteroyltri-L-glutamate. L-homocysteine-binding positions include 442–444 (IGS) and Glu495. Residues 442–444 (IGS) and Glu495 contribute to the L-methionine site. Residues 526 to 527 (RC) and Trp572 each bind 5-methyltetrahydropteroyltri-L-glutamate. Asp610 serves as a coordination point for L-homocysteine. Residue Asp610 coordinates L-methionine. Glu616 is a binding site for 5-methyltetrahydropteroyltri-L-glutamate. Zn(2+)-binding residues include His652, Cys654, and Glu676. The active-site Proton donor is His705. Cys737 contacts Zn(2+).

It belongs to the vitamin-B12 independent methionine synthase family. Zn(2+) serves as cofactor.

The catalysed reaction is 5-methyltetrahydropteroyltri-L-glutamate + L-homocysteine = tetrahydropteroyltri-L-glutamate + L-methionine. It participates in amino-acid biosynthesis; L-methionine biosynthesis via de novo pathway; L-methionine from L-homocysteine (MetE route): step 1/1. Catalyzes the transfer of a methyl group from 5-methyltetrahydrofolate to homocysteine resulting in methionine formation. The polypeptide is 5-methyltetrahydropteroyltriglutamate--homocysteine methyltransferase (Bordetella pertussis (strain Tohama I / ATCC BAA-589 / NCTC 13251)).